We begin with the raw amino-acid sequence, 101 residues long: Small ribosomal subunit protein uS14 (101 aa).

The protein belongs to the universal ribosomal protein uS14 family. In terms of assembly, part of the 30S ribosomal subunit. Contacts proteins S3 and S10.

Its function is as follows. Binds 16S rRNA, required for the assembly of 30S particles and may also be responsible for determining the conformation of the 16S rRNA at the A site. This Salmonella schwarzengrund (strain CVM19633) protein is Small ribosomal subunit protein uS14.